A 111-amino-acid chain; its full sequence is Ig kappa chain V-III region MOPC 70 (111 aa).

A framework-1 region spans residues 1–23 (DIVLTQSPASLAVSLGQRATISC). Cys23 and Cys92 are joined by a disulfide. Positions 24–38 (RASESVDNSGISFMN) are complementarity-determining-1. The interval 39 to 53 (WFQQKPGQPPKLLIY) is framework-2. Residues 54–60 (AASNQGS) are complementarity-determining-2. Positions 61-92 (GVPARFSGSGSGTDFSLNIHPMEEDDTAMYFC) are framework-3. Positions 93 to 101 (QQSKEVPWT) are complementarity-determining-3. The segment at 102 to 111 (FGGGTKLEIK) is framework-4.

The chain is Ig kappa chain V-III region MOPC 70 from Mus musculus (Mouse).